The primary structure comprises 296 residues: Lipoyl synthase (296 aa).

Positions 37, 42, 48, 63, 67, 70, and 276 each coordinate [4Fe-4S] cluster. Residues 49–265 (WSKKHTTVMI…ERLAKTKGFL (217 aa)) enclose the Radical SAM core domain.

Belongs to the radical SAM superfamily. Lipoyl synthase family. It depends on [4Fe-4S] cluster as a cofactor.

It is found in the cytoplasm. It catalyses the reaction [[Fe-S] cluster scaffold protein carrying a second [4Fe-4S](2+) cluster] + N(6)-octanoyl-L-lysyl-[protein] + 2 oxidized [2Fe-2S]-[ferredoxin] + 2 S-adenosyl-L-methionine + 4 H(+) = [[Fe-S] cluster scaffold protein] + N(6)-[(R)-dihydrolipoyl]-L-lysyl-[protein] + 4 Fe(3+) + 2 hydrogen sulfide + 2 5'-deoxyadenosine + 2 L-methionine + 2 reduced [2Fe-2S]-[ferredoxin]. It participates in protein modification; protein lipoylation via endogenous pathway; protein N(6)-(lipoyl)lysine from octanoyl-[acyl-carrier-protein]: step 2/2. In terms of biological role, catalyzes the radical-mediated insertion of two sulfur atoms into the C-6 and C-8 positions of the octanoyl moiety bound to the lipoyl domains of lipoate-dependent enzymes, thereby converting the octanoylated domains into lipoylated derivatives. This is Lipoyl synthase from Rickettsia rickettsii (strain Iowa).